The chain runs to 339 residues: Cyclin-Y-like protein 1 (339 aa).

The region spanning 181-263 is the Cyclin N-terminal domain; that stretch reads QLTAECAIVT…FLELLQFNIN (83 aa).

The protein belongs to the cyclin family. Cyclin Y subfamily.

The protein localises to the cell membrane. Key regulator of Wnt signaling implicated in various biological processes such as embryonic neurogenesis. This chain is Cyclin-Y-like protein 1 (ccnyl1), found in Danio rerio (Zebrafish).